A 291-amino-acid polypeptide reads, in one-letter code: Light-independent protochlorophyllide reductase iron-sulfur ATP-binding protein (291 aa).

Residues 10 to 15 (GIGKST) and K39 each bind ATP. S14 contacts Mg(2+). C95 and C129 together coordinate [4Fe-4S] cluster. 180–181 (NR) provides a ligand contact to ATP.

It belongs to the NifH/BchL/ChlL family. Homodimer. Protochlorophyllide reductase is composed of three subunits; ChlL, ChlN and ChlB. [4Fe-4S] cluster serves as cofactor.

It localises to the plastid. It is found in the chloroplast. The catalysed reaction is chlorophyllide a + oxidized 2[4Fe-4S]-[ferredoxin] + 2 ADP + 2 phosphate = protochlorophyllide a + reduced 2[4Fe-4S]-[ferredoxin] + 2 ATP + 2 H2O. It functions in the pathway porphyrin-containing compound metabolism; chlorophyll biosynthesis (light-independent). Component of the dark-operative protochlorophyllide reductase (DPOR) that uses Mg-ATP and reduced ferredoxin to reduce ring D of protochlorophyllide (Pchlide) to form chlorophyllide a (Chlide). This reaction is light-independent. The L component serves as a unique electron donor to the NB-component of the complex, and binds Mg-ATP. This is Light-independent protochlorophyllide reductase iron-sulfur ATP-binding protein from Larix decidua (European larch).